Here is a 377-residue protein sequence, read N- to C-terminus: UPF0754 membrane protein YheB (377 aa).

Helical transmembrane passes span 1-21 (MGIA…GAVT) and 357-377 (YLGG…VILF).

Belongs to the UPF0754 family.

It localises to the cell membrane. The sequence is that of UPF0754 membrane protein YheB (yheB) from Bacillus subtilis (strain 168).